A 216-amino-acid polypeptide reads, in one-letter code: Probable nicotinate-nucleotide adenylyltransferase (216 aa).

This sequence belongs to the NadD family.

It carries out the reaction nicotinate beta-D-ribonucleotide + ATP + H(+) = deamido-NAD(+) + diphosphate. It participates in cofactor biosynthesis; NAD(+) biosynthesis; deamido-NAD(+) from nicotinate D-ribonucleotide: step 1/1. Functionally, catalyzes the reversible adenylation of nicotinate mononucleotide (NaMN) to nicotinic acid adenine dinucleotide (NaAD). The polypeptide is Probable nicotinate-nucleotide adenylyltransferase (Shewanella baltica (strain OS185)).